Reading from the N-terminus, the 452-residue chain is Inner membrane metabolite transport protein YdjE (452 aa).

The Cytoplasmic segment spans residues 1–20 (MEQYDQIGARLDRLPLARFH). A helical membrane pass occupies residues 21–43 (YRIFGIISFSLLLTGFLSYSGNV). Topologically, residues 44–57 (VLAKLVSNGWSNNF) are periplasmic. Residues 58–80 (LNAAFTSALMFGYFIGSLTGGFI) traverse the membrane as a helical segment. Residues 81–91 (GDYFGRRRAFR) are Cytoplasmic-facing. The helical transmembrane segment at 92–114 (INLLIVGIAATGAAFVPDMYWLI) threads the bilayer. At 115–117 (FFR) the chain is on the periplasmic side. The chain crosses the membrane as a helical span at residues 118-140 (FLMGTGMGALIMVGYASFTEFIP). Residues 141-152 (ATVRGKWSARLS) are Cytoplasmic-facing. A helical transmembrane segment spans residues 153 to 175 (FVGNWSPMLSAAIGVVVIAFFSW). Residues 176–178 (RIM) are Periplasmic-facing. The chain crosses the membrane as a helical span at residues 179-198 (FLLGGIGILLAWFLSGKYFI). The Cytoplasmic portion of the chain corresponds to 199 to 265 (ESPRWLAGKG…KGEMLRRTLV (67 aa)). A helical transmembrane segment spans residues 266–288 (AITVLIAMNISLYTITVWIPTIF). Residues 289–297 (VNSGIDVDK) lie on the Periplasmic side of the membrane. Residues 298–320 (SILMTAVIMIGAPVGIFIAALII) form a helical membrane-spanning segment. The Cytoplasmic portion of the chain corresponds to 321 to 326 (DHFPRR). A helical transmembrane segment spans residues 327–344 (LFGSTLLIIIAVLGYIYS). Residues 345–353 (IQTTEWAIL) lie on the Periplasmic side of the membrane. Residues 354–376 (IYGLVMIFFLYMYVCFASAVYIP) form a helical membrane-spanning segment. Residues 377–388 (ELWPTHLRLRGS) are Cytoplasmic-facing. The helical transmembrane segment at 389–411 (GFVNAVGRIVAVFTPYGVAALLT) threads the bilayer. The Periplasmic segment spans residues 412-415 (HYGS). The chain crosses the membrane as a helical span at residues 416–438 (ITVFMVLGVMLLLCALVLSIFGI). Topologically, residues 439–452 (ETRKVSLEEISEVN) are cytoplasmic.

The protein belongs to the major facilitator superfamily. Sugar transporter (TC 2.A.1.1) family.

The protein resides in the cell inner membrane. The sequence is that of Inner membrane metabolite transport protein YdjE (ydjE) from Escherichia coli (strain K12).